We begin with the raw amino-acid sequence, 291 residues long: Quinol oxidase subunit 2 (291 aa).

Residues 1-28 form the signal peptide; it reads MQLKKAFWKLASLLPLSLLLFLGGCDKK. 2 consecutive transmembrane segments (helical) span residues 49–69 and 91–111; these read SFLLMSLIIAIVFILFTVILI and LEIIWTLVPVIIVIALSIPTV.

It belongs to the cytochrome c oxidase subunit 2 family.

The protein resides in the cell membrane. It catalyses the reaction 2 a quinol + O2 = 2 a quinone + 2 H2O. Catalyzes quinol oxidation with the concomitant reduction of oxygen to water. Subunit II transfers the electrons from a quinol to the binuclear center of the catalytic subunit I. The sequence is that of Quinol oxidase subunit 2 from Bacillus cereus (strain ATCC 14579 / DSM 31 / CCUG 7414 / JCM 2152 / NBRC 15305 / NCIMB 9373 / NCTC 2599 / NRRL B-3711).